Reading from the N-terminus, the 927-residue chain is Perchlorate reductase subunit alpha (927 aa).

Positions 1–31 form a signal peptide, tat-type signal; that stretch reads MVQMTRRGFLLASGATLLGSSLSFRTLAAAA. A 4Fe-4S Mo/W bis-MGD-type domain is found at 53–116; the sequence is DKKTRGAHLI…CAHDYMYGPH (64 aa). Residues histidine 60, cysteine 64, cysteine 68, and cysteine 102 each contribute to the [4Fe-4S] cluster site. A Mo-bis(molybdopterin guanine dinucleotide)-binding site is contributed by aspartate 198.

The protein belongs to the prokaryotic molybdopterin-containing oxidoreductase family. Heterotrimer of alpha, beta and gamma subunits. [4Fe-4S] cluster serves as cofactor. The cofactor is Mo-bis(molybdopterin guanine dinucleotide). Post-translationally, predicted to be exported by the Tat system. The position of the signal peptide cleavage has not been experimentally proven.

The protein resides in the periplasm. Its function is as follows. Component of the perchlorate reductase that catalyzes the reduction of perchlorate to chlorite and allows anaerobic growth on perchlorate as the sole electron acceptor. Is probably also able to reduce chlorate to chlorite. The alpha subunit is likely the catalytic subunit. This chain is Perchlorate reductase subunit alpha (pcrA), found in Dechloromonas aromatica (strain RCB).